The following is a 354-amino-acid chain: Rhodopsin (354 aa).

The Extracellular segment spans residues 1 to 36; the sequence is MNGTEGPNFYVPMSNKTGIVRSPFEYPQYYLAEPWK. N-linked (GlcNAc...) asparagine glycans are attached at residues asparagine 2 and asparagine 15. The helical transmembrane segment at 37-61 threads the bilayer; it reads YSVLAAYMFLLILLGLPINFMTLYV. The Cytoplasmic segment spans residues 62–73; that stretch reads TIQHKKLRTPLN. Residues 74–96 form a helical membrane-spanning segment; that stretch reads YILLNLAFANHFMVLCGFTITMY. Residues 97–110 are Extracellular-facing; the sequence is TSLHGYFVFGQTGC. A disulfide bridge connects residues cysteine 110 and cysteine 187. The chain crosses the membrane as a helical span at residues 111–133; it reads YFEGFFATLGGEIALWSLVVLAI. Residues 134 to 136 carry the 'Ionic lock' involved in activated form stabilization motif; it reads ERY. Residues 134–152 are Cytoplasmic-facing; it reads ERYIVVCKPMSNFRFGENH. Residues 153–173 traverse the membrane as a helical segment; that stretch reads AMMGVAFTWIMALACAVPPLF. Residues 174-202 are Extracellular-facing; the sequence is GWSRYIPEGMQCSCGVDYYTLKPEVNNES. Residues 203-224 form a helical membrane-spanning segment; it reads FVIYMFVVHFLIPLIIISFCYG. Over 225-252 the chain is Cytoplasmic; that stretch reads RLVCTVKEAAAQQQESATTQKAEKEVTR. A helical transmembrane segment spans residues 253 to 274; that stretch reads MVVIMVIFFLICWVPYAYVAFY. At 275–286 the chain is on the extracellular side; it reads IFTHQGSEFGPI. Residues 287-308 form a helical membrane-spanning segment; that stretch reads FMTVPAFFAKSSAIYNPVIYIM. Residue lysine 296 is modified to N6-(retinylidene)lysine. Residues 309–354 are Cytoplasmic-facing; sequence LNKQFRNCMITTLCCGKNPFGDEDASSAATSKTEATSVSTSQVSPA. S-palmitoyl cysteine attachment occurs at residues cysteine 322 and cysteine 323. A disordered region spans residues 331–354; that stretch reads EDASSAATSKTEATSVSTSQVSPA. Positions 334 to 354 are enriched in low complexity; it reads SSAATSKTEATSVSTSQVSPA.

Belongs to the G-protein coupled receptor 1 family. Opsin subfamily. Contains one covalently linked retinal chromophore. Upon light absorption, the covalently bound 11-cis-retinal is converted to all-trans-retinal. After hydrolysis of the Schiff base and release of the covalently bound all-trans-retinal, active rhodopsin is regenerated by binding of a fresh molecule of 11-cis-retinal. In terms of tissue distribution, retina. Localized in the ventral part of the retina.

Its subcellular location is the membrane. The protein localises to the cell projection. It is found in the cilium. It localises to the photoreceptor outer segment. Functionally, photoreceptor required for image-forming vision at low light intensity. Required for photoreceptor cell viability after birth. May use a mixture of retinal and 3-dehydroretinal as visual pigment. Light-induced isomerization of 11-cis to all-trans retinal triggers a conformational change that activates signaling via G-proteins. Subsequent receptor phosphorylation mediates displacement of the bound G-protein alpha subunit by arrestin and terminates signaling. In Aquarana catesbeiana (American bullfrog), this protein is Rhodopsin (RHO).